A 275-amino-acid polypeptide reads, in one-letter code: Phosphate import ATP-binding protein PstB 1 (275 aa).

The 240-residue stretch at 22-261 folds into the ABC transporter domain; the sequence is IETRDLSVYY…DRTEKIFNSP (240 aa). 54 to 61 is a binding site for ATP; the sequence is GPSGCGKS.

It belongs to the ABC transporter superfamily. Phosphate importer (TC 3.A.1.7) family. As to quaternary structure, the complex is composed of two ATP-binding proteins (PstB), two transmembrane proteins (PstC and PstA) and a solute-binding protein (PstS).

It localises to the cell inner membrane. The enzyme catalyses phosphate(out) + ATP + H2O = ADP + 2 phosphate(in) + H(+). Its function is as follows. Part of the ABC transporter complex PstSACB involved in phosphate import. Responsible for energy coupling to the transport system. The polypeptide is Phosphate import ATP-binding protein PstB 1 (Synechococcus sp. (strain JA-3-3Ab) (Cyanobacteria bacterium Yellowstone A-Prime)).